Consider the following 306-residue polypeptide: Ribonuclease Z (306 aa).

7 residues coordinate Zn(2+): histidine 63, histidine 65, aspartate 67, histidine 68, histidine 140, aspartate 211, and histidine 269. The active-site Proton acceptor is the aspartate 67.

This sequence belongs to the RNase Z family. In terms of assembly, homodimer. Zn(2+) is required as a cofactor.

It carries out the reaction Endonucleolytic cleavage of RNA, removing extra 3' nucleotides from tRNA precursor, generating 3' termini of tRNAs. A 3'-hydroxy group is left at the tRNA terminus and a 5'-phosphoryl group is left at the trailer molecule.. Its function is as follows. Zinc phosphodiesterase, which displays some tRNA 3'-processing endonuclease activity. Probably involved in tRNA maturation, by removing a 3'-trailer from precursor tRNA. The chain is Ribonuclease Z from Listeria monocytogenes serotype 4a (strain HCC23).